The chain runs to 398 residues: MPNPPRTAAIIVAAGRGLRAGAGGPKQYRTLAGRPVIARALQPFCTHPEVFAVQPVTNPDDTAIFNDAVTGLNFRPAVGGGATRQGSVRAGLEALAELNPDIVLIHDAARPFVTPDLISRAIVAAGQTGAALPVVAINDTVKQINAEGCVEATPDRARLRIAQTPQAFRFDVILDAHRRAARDGRDDFTDDAAIAEWAGLTVSTFEGDAANMKLTTPDDFIREESRLTALLGDIRTGTGYDVHAFGDGDHVWLCGLKVPHNRGFLAHSDGDVGLHALVDAILGALADGDIGSHFPPTDPQWKGAASDKFLKYAVERVAARGGRIANLEVTMICERPKIGPLREAMRARIAEITGLPVSRIAVKATTSERLGFTGREEGIAATASATIRLPWGAEGLAG.

Residues 1–234 (MPNPPRTAAI…SRLTALLGDI (234 aa)) form a 2-C-methyl-D-erythritol 4-phosphate cytidylyltransferase region. Positions 235–398 (RTGTGYDVHA…LPWGAEGLAG (164 aa)) are 2-C-methyl-D-erythritol 2,4-cyclodiphosphate synthase. A divalent metal cation is bound by residues Asp-241 and His-243. 4-CDP-2-C-methyl-D-erythritol 2-phosphate contacts are provided by residues 241-243 (DVH) and 267-268 (HS). His-275 serves as a coordination point for a divalent metal cation. Residues 289–291 (DIG), 365–368 (TTSE), Phe-372, and Arg-375 each bind 4-CDP-2-C-methyl-D-erythritol 2-phosphate.

This sequence in the N-terminal section; belongs to the IspD/TarI cytidylyltransferase family. IspD subfamily. The protein in the C-terminal section; belongs to the IspF family. Requires a divalent metal cation as cofactor.

It catalyses the reaction 2-C-methyl-D-erythritol 4-phosphate + CTP + H(+) = 4-CDP-2-C-methyl-D-erythritol + diphosphate. The enzyme catalyses 4-CDP-2-C-methyl-D-erythritol 2-phosphate = 2-C-methyl-D-erythritol 2,4-cyclic diphosphate + CMP. It functions in the pathway isoprenoid biosynthesis; isopentenyl diphosphate biosynthesis via DXP pathway; isopentenyl diphosphate from 1-deoxy-D-xylulose 5-phosphate: step 2/6. It participates in isoprenoid biosynthesis; isopentenyl diphosphate biosynthesis via DXP pathway; isopentenyl diphosphate from 1-deoxy-D-xylulose 5-phosphate: step 4/6. In terms of biological role, bifunctional enzyme that catalyzes the formation of 4-diphosphocytidyl-2-C-methyl-D-erythritol from CTP and 2-C-methyl-D-erythritol 4-phosphate (MEP) (IspD), and catalyzes the conversion of 4-diphosphocytidyl-2-C-methyl-D-erythritol 2-phosphate (CDP-ME2P) to 2-C-methyl-D-erythritol 2,4-cyclodiphosphate (ME-CPP) with a corresponding release of cytidine 5-monophosphate (CMP) (IspF). The chain is Bifunctional enzyme IspD/IspF from Rhodopseudomonas palustris (strain BisB5).